We begin with the raw amino-acid sequence, 783 residues long: ATP-dependent DNA helicase Hel308 (783 aa).

ATP-binding positions include Q29 and V47–T54. Residues E34–D209 form the Helicase ATP-binding domain. A DEAH box motif is present at residues D154–H157. The 202-residue stretch at Q242–A443 folds into the Helicase C-terminal domain. A disordered region spans residues E744 to S783.

Belongs to the helicase family. Hel308 subfamily. In terms of assembly, monomer.

The enzyme catalyses Couples ATP hydrolysis with the unwinding of duplex DNA by translocating in the 3'-5' direction.. It catalyses the reaction ATP + H2O = ADP + phosphate + H(+). In terms of biological role, DNA-dependent ATPase and 3'-5' DNA helicase that may be involved in repair of stalled replication forks. This is ATP-dependent DNA helicase Hel308 from Halobacterium salinarum (strain ATCC 700922 / JCM 11081 / NRC-1) (Halobacterium halobium).